Reading from the N-terminus, the 208-residue chain is Translation initiation factor 2 subunit beta (208 aa).

Residues 144–202 (GIEEGKEYTVEISEVGSSGEGRASFRGFTIFVPGTKKGETVKVKIKKIKNDVAIAEVVS) form the TRAM domain.

Belongs to the eIF-2-beta/eIF-5 family. Heterotrimer composed of an alpha, a beta and a gamma chain.

Its function is as follows. eIF-2 functions in the early steps of protein synthesis by forming a ternary complex with GTP and initiator tRNA. This Thermoplasma volcanium (strain ATCC 51530 / DSM 4299 / JCM 9571 / NBRC 15438 / GSS1) protein is Translation initiation factor 2 subunit beta (eif2b).